Consider the following 276-residue polypeptide: Undecaprenyl-diphosphatase (276 aa).

7 consecutive transmembrane segments (helical) span residues 12–34 (LGIVEGLTEFLPISSTGHLIVVG), 43–63 (TATAFKIIIQLGAILAVMWEF), 85–105 (FNLLLAFIPAVVFGLAFADLI), 108–128 (WLFNPITVATALIVGGIIMLW), 185–205 (TEFSFFLAMPTMIAATVYSLF), 218–238 (IFAIGFVSTFIVAMITVRALL), and 249–269 (FAWYRIAFGLVILATWQLHLI).

It belongs to the UppP family.

It localises to the cell inner membrane. The catalysed reaction is di-trans,octa-cis-undecaprenyl diphosphate + H2O = di-trans,octa-cis-undecaprenyl phosphate + phosphate + H(+). Functionally, catalyzes the dephosphorylation of undecaprenyl diphosphate (UPP). Confers resistance to bacitracin. This Ectopseudomonas mendocina (strain ymp) (Pseudomonas mendocina) protein is Undecaprenyl-diphosphatase.